A 106-amino-acid polypeptide reads, in one-letter code: Cell division topological specificity factor (106 aa).

This sequence belongs to the MinE family.

Functionally, prevents the cell division inhibition by proteins MinC and MinD at internal division sites while permitting inhibition at polar sites. This ensures cell division at the proper site by restricting the formation of a division septum at the midpoint of the long axis of the cell. This is Cell division topological specificity factor from Prochlorococcus marinus subsp. pastoris (strain CCMP1986 / NIES-2087 / MED4).